The chain runs to 511 residues: Putative thymidine phosphorylase 1 (511 aa).

This sequence belongs to the thymidine/pyrimidine-nucleoside phosphorylase family. Type 2 subfamily.

The enzyme catalyses thymidine + phosphate = 2-deoxy-alpha-D-ribose 1-phosphate + thymine. This Acidovorax sp. (strain JS42) protein is Putative thymidine phosphorylase 1.